A 124-amino-acid chain; its full sequence is Cytochrome c2 (124 aa).

A Pyrrolidone carboxylic acid modification is found at glutamine 1. 4 residues coordinate heme c: cysteine 15, cysteine 18, histidine 19, and methionine 100.

Post-translationally, binds 1 heme c group covalently per subunit.

It localises to the periplasm. Its function is as follows. Cytochrome c2 is found mainly in purple, non-sulfur, photosynthetic bacteria where it functions as the electron donor to the oxidized bacteriochlorophyll in the photophosphorylation pathway. However, it may also have a role in the respiratory chain and is found in some non-photosynthetic bacteria. This Cereibacter sphaeroides (Rhodobacter sphaeroides) protein is Cytochrome c2 (cycA).